We begin with the raw amino-acid sequence, 360 residues long: Alpha-N-acetyl-neuraminyl-2,3-beta-galactosyl-1,3-N-acetyl-galactosaminide alpha-2,6-sialyltransferase (360 aa).

The Cytoplasmic segment spans residues 1-71 (MEHVVTCWRL…PGRLLLLTLC (71 aa)). A helical; Signal-anchor for type II membrane protein transmembrane segment spans residues 72-94 (ILTFSAVCVFLCCWACLPLCLAT). Residues 95 to 360 (CLDRHLPAAP…VFAHPSWRAK (266 aa)) lie on the Lumenal side of the membrane. Cysteines 134 and 283 form a disulfide. N-linked (GlcNAc...) asparagine glycosylation is present at N193.

Belongs to the glycosyltransferase 29 family. High expression in brain and colon and to a lesser extent in lung, heart, kidney, spleen and thymus.

The protein localises to the golgi apparatus membrane. The enzyme catalyses an alpha-Neu5Ac-(2-&gt;3)-beta-D-Gal-(1-&gt;3)-D-GlcNAc derivative + CMP-N-acetyl-beta-neuraminate = an alpha-Neu5Ac-(2-&gt;3)-beta-D-Gal-(1-&gt;3)-[alpha-Neu5Ac-(2-&gt;6)]-D-GlcNAc derivative + CMP + H(+). It catalyses the reaction N-acetyl-alpha-neuraminosyl-(2-&gt;3)-beta-D-galactosyl-(1-&gt;3)-N-acetyl-D-galactosamine + CMP-N-acetyl-beta-neuraminate = N-acetyl-alpha-neuraminosyl-(2-&gt;3)-beta-D-galactosyl-(1-&gt;3)-[N-acetyl-alpha-neuraminosyl-(2-&gt;6)]-N-acetyl-D-galactosamine + CMP + H(+). It carries out the reaction a ganglioside GM1b (d18:1(4E)) + CMP-N-acetyl-beta-neuraminate = a ganglioside GD1alpha (d18:1(4E)) + CMP + H(+). The catalysed reaction is 3-O-[alpha-Neu5Ac-(2-&gt;3)-beta-D-Gal-(1-&gt;3)-alpha-D-GalNAc]-L-Ser-[protein] + CMP-N-acetyl-beta-neuraminate = a 3-O-{alpha-Neu5Ac-(2-&gt;3)-beta-D-Gal-(1-&gt;3)-[alpha-Neu5Ac-(2-&gt;6)]-alpha-D-GalNAc}-L-seryl-[protein] + CMP + H(+). The enzyme catalyses 3-O-[alpha-Neu5Ac-(2-&gt;3)-beta-D-Gal-(1-&gt;3)-alpha-D-GalNAc]-L-Thr-[protein] + CMP-N-acetyl-beta-neuraminate = a 3-O-{alpha-Neu5Ac-(2-&gt;3)-beta-D-Gal-(1-&gt;3)-[alpha-Neu5Ac-(2-&gt;6)]-alpha-D-GalNAc}-L-threonyl-[protein] + CMP + H(+). It functions in the pathway protein modification; protein glycosylation. Its pathway is glycolipid biosynthesis. Transfers the sialyl group (N-acetyl-alpha-neuraminyl or NeuAc) from CMP-NeuAc to the GalNAc residue on the NeuAc-alpha-2,3-Gal-beta-1,3-GalNAc sequence of glycoproteins and glycolipids forming an alpha-2,6-linkage. Produces branched type disialyl structures by transfer of a sialyl group onto a GalNAc residue inside the backbone core chains. Prefers O-glycans to glycoproteins or glycolipids. The polypeptide is Alpha-N-acetyl-neuraminyl-2,3-beta-galactosyl-1,3-N-acetyl-galactosaminide alpha-2,6-sialyltransferase (St6galnac4) (Mus musculus (Mouse)).